We begin with the raw amino-acid sequence, 149 residues long: Arginine repressor (149 aa).

This sequence belongs to the ArgR family.

Its subcellular location is the cytoplasm. It functions in the pathway amino-acid biosynthesis; L-arginine biosynthesis [regulation]. Its function is as follows. Regulates arginine biosynthesis genes. The sequence is that of Arginine repressor from Bacillus velezensis (strain DSM 23117 / BGSC 10A6 / LMG 26770 / FZB42) (Bacillus amyloliquefaciens subsp. plantarum).